We begin with the raw amino-acid sequence, 658 residues long: Pentatricopeptide repeat-containing protein At1g69290 (658 aa).

Disordered regions lie at residues 1–23 (MFRK…ESPS) and 39–61 (TLSP…KSSF). Polar residues predominate over residues 50-61 (PKTLTPDQKSSF). 11 PPR repeats span residues 214–249 (DLVA…GVKP), 250–284 (DELS…GFAS), 285–320 (RRIL…GEES), 323–353 (SVET…AQKL), 361–395 (DSSV…GGGS), 397–431 (GIGV…GLQL), 432–466 (DVEI…RVVD), 467–497 (LKGS…VVED), 503–537 (NSHD…RYEP), 538–568 (NNQT…IKGK), and 581–615 (DHAL…KIFV).

The protein belongs to the PPR family. P subfamily.

This chain is Pentatricopeptide repeat-containing protein At1g69290, found in Arabidopsis thaliana (Mouse-ear cress).